We begin with the raw amino-acid sequence, 485 residues long: MSASDFSSAVVVLAAGAGTRMKSDLQKTLHSIGGRSLISHSLHAAAGLNPEHIVAVIGHGRDQVGPAVAQVAEELDREVLIAIQEEQNGTGHAVQCAMDQLEGFEGTIIVTNGDVPLLTDHTLSALLDAHVEVPTAVTVLTMRLDDPTGYGRIVRNEEGEVTAIVEQKDASAEVQAIDEVNSGVFAFDAAILRSALAELKSDNAQGELYLTDVLGIARGEGHPVRAHTAADARELAGVNDRVQLAEAGAELNRRTVIAAMRGGATIVDPATTWIDVEVSIGRDVIIHPGTQLKGETVIGDRVEVGPDTTLTNMTIGDGASVIRTHGFDSTIGENATVGPFTYIRPGTTLGPEGKLGGFVETKKATIGRGSKVPHLTYVGDATIGEESNIGASSVFVNYDGENKHHTTIGSHVRTGSDTMFIAPVTVGDGAYSGAGTVIKDDVPPGALAVSGGRQRNIEGWVQKKRPGTAAAQAAEAAQNVHNQEG.

The pyrophosphorylase stretch occupies residues 1–241; that stretch reads MSASDFSSAV…ARELAGVNDR (241 aa). UDP-N-acetyl-alpha-D-glucosamine contacts are provided by residues 13 to 16, lysine 27, glutamine 84, and 89 to 90; these read LAAG and GT. Aspartate 114 contacts Mg(2+). UDP-N-acetyl-alpha-D-glucosamine is bound by residues glycine 151, glutamate 166, asparagine 181, and asparagine 239. A Mg(2+)-binding site is contributed by asparagine 239. Residues 242–262 form a linker region; that stretch reads VQLAEAGAELNRRTVIAAMRG. The N-acetyltransferase stretch occupies residues 263–485; that stretch reads GATIVDPATT…AAQNVHNQEG (223 aa). 2 residues coordinate UDP-N-acetyl-alpha-D-glucosamine: arginine 344 and lysine 362. The active-site Proton acceptor is the histidine 374. Positions 377 and 388 each coordinate UDP-N-acetyl-alpha-D-glucosamine. Acetyl-CoA contacts are provided by residues alanine 391, 397–398, serine 416, and alanine 434; that span reads NY. Positions 465 to 485 are disordered; it reads RPGTAAAQAAEAAQNVHNQEG. A compositionally biased stretch (low complexity) spans 469–478; the sequence is AAAQAAEAAQ.

The protein in the N-terminal section; belongs to the N-acetylglucosamine-1-phosphate uridyltransferase family. It in the C-terminal section; belongs to the transferase hexapeptide repeat family. In terms of assembly, homotrimer. Mg(2+) serves as cofactor.

The protein localises to the cytoplasm. It catalyses the reaction alpha-D-glucosamine 1-phosphate + acetyl-CoA = N-acetyl-alpha-D-glucosamine 1-phosphate + CoA + H(+). The enzyme catalyses N-acetyl-alpha-D-glucosamine 1-phosphate + UTP + H(+) = UDP-N-acetyl-alpha-D-glucosamine + diphosphate. It participates in nucleotide-sugar biosynthesis; UDP-N-acetyl-alpha-D-glucosamine biosynthesis; N-acetyl-alpha-D-glucosamine 1-phosphate from alpha-D-glucosamine 6-phosphate (route II): step 2/2. The protein operates within nucleotide-sugar biosynthesis; UDP-N-acetyl-alpha-D-glucosamine biosynthesis; UDP-N-acetyl-alpha-D-glucosamine from N-acetyl-alpha-D-glucosamine 1-phosphate: step 1/1. Its pathway is bacterial outer membrane biogenesis; LPS lipid A biosynthesis. In terms of biological role, catalyzes the last two sequential reactions in the de novo biosynthetic pathway for UDP-N-acetylglucosamine (UDP-GlcNAc). The C-terminal domain catalyzes the transfer of acetyl group from acetyl coenzyme A to glucosamine-1-phosphate (GlcN-1-P) to produce N-acetylglucosamine-1-phosphate (GlcNAc-1-P), which is converted into UDP-GlcNAc by the transfer of uridine 5-monophosphate (from uridine 5-triphosphate), a reaction catalyzed by the N-terminal domain. This is Bifunctional protein GlmU from Corynebacterium glutamicum (strain ATCC 13032 / DSM 20300 / JCM 1318 / BCRC 11384 / CCUG 27702 / LMG 3730 / NBRC 12168 / NCIMB 10025 / NRRL B-2784 / 534).